Here is a 389-residue protein sequence, read N- to C-terminus: MADFKLADRLATLPPYLFAGIDKVKAEVAARGVDIISLGIGDPDMPTPDFIIEAMKKAVERPANHQYPSYVGMLEFRQEVANWYGRRFGVSLDPKTEVIGLIGSKEGIAHFPLAFVNPGDLVLVCTPNYPVYHIATGFVGGEVQFIPLVEENDYLPDLDAIPAATWDRAKMIFVNYPNNPTAATAPRAFYEKLIGICRKHNVIIAHDTAYTEVYYDENDKPMSILEVEGAKDVTIEFHSLSKTYNMTGWRVGMAVGNASLVAGLGKVKENVDSGIFQAVQEASIVALRDGDDFCRELRGIYRKRRDVVVAALNKVGIACRVPTAAFYIWAKVPAGYGSSAEFVTAVLEKTGVVLTPGNGFGTPGEGYFRISLTVDTDRLEEAVSRIANL.

Residues Y16 and G41 each coordinate substrate. Pyridoxal 5'-phosphate is bound by residues Y70, S104–K105, Y129, N179, Y210, and S239–S241. Substrate is bound by residues K105, Y129, and N179. Position 242 is an N6-(pyridoxal phosphate)lysine (K242). R250 contacts pyridoxal 5'-phosphate. R369 is a binding site for substrate.

The protein belongs to the class-I pyridoxal-phosphate-dependent aminotransferase family. LL-diaminopimelate aminotransferase subfamily. As to quaternary structure, homodimer. It depends on pyridoxal 5'-phosphate as a cofactor.

The catalysed reaction is (2S,6S)-2,6-diaminopimelate + 2-oxoglutarate = (S)-2,3,4,5-tetrahydrodipicolinate + L-glutamate + H2O + H(+). It functions in the pathway amino-acid biosynthesis; L-lysine biosynthesis via DAP pathway; LL-2,6-diaminopimelate from (S)-tetrahydrodipicolinate (aminotransferase route): step 1/1. Its function is as follows. Involved in the synthesis of meso-diaminopimelate (m-DAP or DL-DAP), required for both lysine and peptidoglycan biosynthesis. Catalyzes the direct conversion of tetrahydrodipicolinate to LL-diaminopimelate. The sequence is that of LL-diaminopimelate aminotransferase from Nitratidesulfovibrio vulgaris (strain DSM 19637 / Miyazaki F) (Desulfovibrio vulgaris).